A 436-amino-acid polypeptide reads, in one-letter code: MNNIVAIVGRPNVGKSTLFNRLIQRREAIVDSVSGVTRDRNYGKSEWNGKEFSVIDTGGYIRGSDDIFEGEIRKQVELAIDESDVIIFVVDVEEGITPMDDAVAKMLRKVTKPVLLAVNKVDNAMREKDAVEFYNLGLGEYYTFASISGSGTGDLLDALIDAFPIKPLPTQEEIVLPRFAVVGRPNAGKSSFINALIGKERFMVTDIAGTTRDSIDTKYDRFGFEFNLVDTAGIRRKAKVKEDLEFYSVMRSVRAIEHADVCILIIDATRGFEGQDQSIFWLAEKNRKGVVILVNKWDLVEKDTMSTRDYEAKIREELMPFVDVPILFVSALTKQRLLKALEATVQVYENRQQRISTSKFNEYMLKIIENHPPPALKGKFVKIKYCMQLPTPTPQFVFFANLPQYVKDAYKRFLENKIRENWDFEGVPIDIYIREK.

EngA-type G domains follow at residues 3-167 and 177-352; these read NIVA…PIKP and PRFA…ENRQ. GTP is bound by residues 9 to 16, 56 to 60, 119 to 122, 183 to 190, 230 to 234, and 295 to 298; these read GRPNVGKS, DTGGY, NKVD, GRPNAGKS, DTAGI, and NKWD. Residues 353-436 form the KH-like domain; that stretch reads QRISTSKFNE…VPIDIYIREK (84 aa).

Belongs to the TRAFAC class TrmE-Era-EngA-EngB-Septin-like GTPase superfamily. EngA (Der) GTPase family. Associates with the 50S ribosomal subunit.

In terms of biological role, GTPase that plays an essential role in the late steps of ribosome biogenesis. The polypeptide is GTPase Der (Flavobacterium psychrophilum (strain ATCC 49511 / DSM 21280 / CIP 103535 / JIP02/86)).